Here is a 64-residue protein sequence, read N- to C-terminus: Conotoxin Ts-011 (64 aa).

An N-terminal signal peptide occupies residues 1–22; the sequence is MHCLPVLVILLLLIASTPSVDA. Positions 23–52 are excised as a propeptide; that stretch reads RPKTKDDVPPASFHGADDANRILQTLWNLR. The residue at position 63 (I63) is an Isoleucine amide.

This sequence belongs to the conotoxin T superfamily. In terms of processing, contains 2 disulfide bonds that can be either 'C1-C3, C2-C4' or 'C1-C4, C2-C3', since these disulfide connectivities have been observed for conotoxins with cysteine framework V (for examples, see AC P0DQQ7 and AC P81755). As to expression, expressed by the venom duct.

It is found in the secreted. The polypeptide is Conotoxin Ts-011 (Conus tessulatus (Tessellate cone)).